We begin with the raw amino-acid sequence, 263 residues long: Lens fiber major intrinsic protein (263 aa).

Residues 1–9 (MWELRSASF) lie on the Cytoplasmic side of the membrane. A helical transmembrane segment spans residues 10 to 29 (WRAIFAEFFATLFYVFFGLG). The Extracellular segment spans residues 30–41 (ASLRWAPGPLHV). A helical transmembrane segment spans residues 42–59 (LQVALAFGLALAXLVQTV). The Cytoplasmic portion of the chain corresponds to 60 to 61 (GH). An intramembrane region (discontinuously helical) is located at residues 62–77 (ISGAHVNPAVTFXFLV). The NPA 1 motif lies at 68–70 (NPA). At 78 to 82 (GSQMS) the chain is on the cytoplasmic side. A helical transmembrane segment spans residues 83-106 (LLRAFCYMAAQLLGAVAGAAVLYS). Residues 107 to 127 (VTPPAVRGNLALNTLHAGVSV) are Extracellular-facing. A helical transmembrane segment spans residues 128–148 (XQATTVEIFLTLQFVLCIFAT). Topologically, residues 149-156 (YDERRNGR) are cytoplasmic. Residues 157–175 (LGSVALAVGFSLTLGHLFG) form a helical membrane-spanning segment. At 176 to 178 (MYY) the chain is on the extracellular side. The segment at residues 179–193 (TGAGMNPARSFAPAI) is an intramembrane region (discontinuously helical). Residues 184–186 (NPA) carry the NPA 2 motif. Residues 194 to 200 (LTRNFTN) lie on the Extracellular side of the membrane. Residues 201 to 222 (HWVYWVGPIIGGGLGSLLYDFL) traverse the membrane as a helical segment. Over 223–263 (LFPRLKSVSERLSILKGTRPSDNNGQPEGTGEPVELKTQAL) the chain is Cytoplasmic. Positions 227–237 (LKSVSERLSIL) are interaction with CALM. Phosphoserine is present on residues Ser-235 and Ser-243. Residues 238–263 (KGTRPSDNNGQPEGTGEPVELKTQAL) form a disordered region. 2 positions are modified to deamidated asparagine; by deterioration: Asn-245 and Asn-246.

This sequence belongs to the MIP/aquaporin (TC 1.A.8) family. Homotetramer; each monomer provides an independent water pore. Two homotetramers on opposing membranes can dimerize, forming a cell-cell junction. Interacts with CALM; the calcium-calmodulin/CALM complex interacts with the cytoplasmic domains of two aquaporins, leading to channel closure. Interacts with BFSP1 (via C-terminus); prevents calcium-dependent inhibition of the water channel activity. In terms of processing, subject to partial proteolytic cleavage in the eye lens core. Partial proteolysis promotes interactions between tetramers from adjoining membranes. Post-translationally, fatty acylated at Met-1 and Lys-238. The acyl modifications, in decreasing order of ion abundance, are: oleoyl (C18:1) &gt; palmitoyl (C16:0) &gt; stearoyl (C18:0) &gt; eicosenoyl (C20:1) &gt; dihomo-gamma-linolenoyl (C20:3) &gt; palmitoleoyl (C16:1) &gt; eicosadienoyl (C20:2). Detected in eye lens (at protein level).

Its subcellular location is the cell membrane. It localises to the cell junction. It carries out the reaction H2O(in) = H2O(out). The water channel activity is inhibited by calcium through calmodulin/CALM. Its function is as follows. Aquaporins form homotetrameric transmembrane channels, with each monomer independently mediating water transport across the plasma membrane along its osmotic gradient. Specifically expressed in lens fiber cells, this aquaporin is crucial for maintaining lens water homeostasis and transparency. Beyond water permeability, it also acts as a cell-to-cell adhesion molecule, forming thin junctions between lens fiber cells that are essential for maintaining the ordered structure and transparency of the lens. The protein is Lens fiber major intrinsic protein of Cavia porcellus (Guinea pig).